A 557-amino-acid polypeptide reads, in one-letter code: MAAQGFLLIATFLLVLMVLARPLGSGLARLINDIPLPGTAGVERILFRLPGVSDHEMNWKQYLCAILGLNMLGLAVLFFMLLGQHYLPLNPQQLPGLSWDLALNTAVSFVTNTNWQSYSGETTLSYFSQMAGLTVQNFLSAASGIAVIFALIRAFTRQSMSTLGNAWVDLLRITLWVLVPVALLIALFFIQQGALQNFQPYQAVNTVEGAQQLLPMGPVASQEAIKMLGTNGGGFFNANSSHPFENPTALTNFVQMLAIFLIPTALCFAFGEVTGDRRQGRMLLWAMSVIFVICVGVVMWAEVQGNPHLLALGADSSINMEGKESRFGVLVSSLFAVVTTAASCGAVIAMHDSFTALGGMVPMWLMQIGEVVFGGVGSGLYGMMLFVLLAVFIAGLMIGRTPEYLGKKIDVREMKLTALAILVTPTLVLMGAALAMMTDAGRSAMLNPGPHGFSEVLYAVSSAANNNGSAFAGLSANSPFWNCLLAFCMFVGRFGVIIPVMAIAGSLVSKKSQPASSGTLPTHGPLFVGLLIGTVLLVGALTFIPALALGPVAEYLS.

Helical transmembrane passes span 5–25, 63–83, 132–152, 170–190, 253–273, 283–303, 329–349, 356–376, 379–399, 416–436, 484–504, and 526–546; these read GFLL…PLGS, LCAI…MLLG, GLTV…FALI, LLRI…LFFI, FVQM…FGEV, LLWA…WAEV, VLVS…AVIA, ALGG…FGGV, GLYG…LMIG, LTAL…ALAM, LLAF…MAIA, and LFVG…FIPA.

This sequence belongs to the KdpA family. In terms of assembly, the system is composed of three essential subunits: KdpA, KdpB and KdpC.

It is found in the cell inner membrane. In terms of biological role, part of the high-affinity ATP-driven potassium transport (or Kdp) system, which catalyzes the hydrolysis of ATP coupled with the electrogenic transport of potassium into the cytoplasm. This subunit binds the periplasmic potassium ions and delivers the ions to the membrane domain of KdpB through an intramembrane tunnel. In Escherichia coli O139:H28 (strain E24377A / ETEC), this protein is Potassium-transporting ATPase potassium-binding subunit.